The chain runs to 241 residues: Transcriptional regulatory protein SrrA (241 aa).

The 114-residue stretch at 4 to 117 folds into the Response regulatory domain; it reads EILIVDDEDR…EVVLRVKALL (114 aa). Residue Asp-53 is modified to 4-aspartylphosphate. A DNA-binding region (ompR/PhoB-type) is located at residues 133–233; it reads RDVIEFKHLE…VWGVGYKFEV (101 aa).

Post-translationally, phosphorylated by SrrB.

It is found in the cytoplasm. Member of the two-component regulatory system SrrA/SrrB, which is involved in the global regulation of staphylococcal virulence factors in response to environmental oxygen levels as well as biofilm formation. Also plays an essential role in host-derived nitric oxide resistance by regulating hmp/flavohemoglobin, an enzyme that detoxifies nitric oxide by converting it to nitrate. Functions as a transcription regulator by direct binding to promoter regions of target genes. This chain is Transcriptional regulatory protein SrrA (srrA), found in Staphylococcus aureus (strain NCTC 8325 / PS 47).